Reading from the N-terminus, the 628-residue chain is Phosphomethylpyrimidine synthase (628 aa).

Substrate-binding positions include Asn-228, Met-257, Tyr-286, His-322, 342-344 (SRG), 383-386 (DGLR), and Glu-422. Zn(2+) is bound at residue His-426. Tyr-449 lines the substrate pocket. Residue His-490 participates in Zn(2+) binding. The [4Fe-4S] cluster site is built by Cys-570, Cys-573, and Cys-578.

The protein belongs to the ThiC family. As to quaternary structure, homodimer. [4Fe-4S] cluster serves as cofactor.

It carries out the reaction 5-amino-1-(5-phospho-beta-D-ribosyl)imidazole + S-adenosyl-L-methionine = 4-amino-2-methyl-5-(phosphooxymethyl)pyrimidine + CO + 5'-deoxyadenosine + formate + L-methionine + 3 H(+). It participates in cofactor biosynthesis; thiamine diphosphate biosynthesis. In terms of biological role, catalyzes the synthesis of the hydroxymethylpyrimidine phosphate (HMP-P) moiety of thiamine from aminoimidazole ribotide (AIR) in a radical S-adenosyl-L-methionine (SAM)-dependent reaction. The protein is Phosphomethylpyrimidine synthase of Methylibium petroleiphilum (strain ATCC BAA-1232 / LMG 22953 / PM1).